The sequence spans 315 residues: Heterodimeric geranylgeranyl pyrophosphate synthase small subunit 1, chloroplastic (315 aa).

Positions 124 and 130 each coordinate Mg(2+). Residues K228, Q265, and K280 each contribute to the dimethylallyl diphosphate site.

Belongs to the FPP/GGPP synthase family. In terms of assembly, part of a heterodimeric geranyl(geranyl)diphosphate synthase. It depends on Mg(2+) as a cofactor. Mainly expressed in trichomes, and, to a lower extent, in roots, leaves, flowers and stems.

The protein localises to the plastid. Its subcellular location is the chloroplast thylakoid membrane. It is found in the chloroplast. Functionally, heterodimeric geranyl(geranyl)-diphosphate (GPP) synthase small subunit. The small subunit alone is inactive in vitro while the large subunit GGPPS1 catalyzes mainly the production of geranygeranyl-diphosphate in vitro. Upon association of the two subunits, the product profile changes and the production of gerany-diphosphate is strongly increased. In Cannabis sativa (Hemp), this protein is Heterodimeric geranylgeranyl pyrophosphate synthase small subunit 1, chloroplastic.